A 111-amino-acid polypeptide reads, in one-letter code: Ribonuclease P protein component (111 aa).

The protein belongs to the RnpA family. Consists of a catalytic RNA component (M1 or rnpB) and a protein subunit.

It carries out the reaction Endonucleolytic cleavage of RNA, removing 5'-extranucleotides from tRNA precursor.. Functionally, RNaseP catalyzes the removal of the 5'-leader sequence from pre-tRNA to produce the mature 5'-terminus. It can also cleave other RNA substrates such as 4.5S RNA. The protein component plays an auxiliary but essential role in vivo by binding to the 5'-leader sequence and broadening the substrate specificity of the ribozyme. This Streptococcus thermophilus (strain CNRZ 1066) protein is Ribonuclease P protein component.